We begin with the raw amino-acid sequence, 765 residues long: Glucosamine inositolphosphorylceramide transferase 1 (765 aa).

3 helical membrane passes run 43 to 63 (FFAS…WFVF), 394 to 414 (VILG…LGFL), and 476 to 496 (MGKF…CVGV). Substrate is bound by residues asparagine 553, 577–582 (NSLNNR), 598–600 (DDD), arginine 628, and 683–687 (FNCED). Position 600 (aspartate 600) interacts with Mn(2+). Cysteine 685 and cysteine 738 are joined by a disulfide. The active site involves aspartate 687.

The protein belongs to the glycosyltransferase 64 family. Requires Mn(2+) as cofactor. As to expression, specifically and highly expressed in developing embryos and mature seeds. Also detected at low levels in stigma and pollen.

It is found in the membrane. It catalyses the reaction an N-(2R-hydroxy-very-long-chain fatty acyl)-(R)-4-hydroxysphingoid base + a 1,2-diacyl-sn-glycero-3-phospho-(1D-myo-inositol) = a 1D-myo-inositol-1-phospho-N-[(R)-2-hydroxy-very-long-chain fatty acyl]-(R)-4-hydroxysphingoid base + a 1,2-diacyl-sn-glycerol. It functions in the pathway sphingolipid metabolism. In terms of biological role, glycosyltransferase that mediates the glycosylation of glycosylinositol phosphorylceramides (GIPCs), the major sphingolipids in the plasma membrane; acts as a HexN(Ac)-specific GIPC sugar transferase and accepts glucosamine (GlcN) and N-acetylglucosamine (GlcNAc) as the sugar unit. Responsible for the glycosylation of a subgroup of GIPCs found in seeds and pollen that contain GlcNAc and GlcN (GlcN(Ac)). Maybe involved in the maintenance of cell-cell adhesion. This is Glucosamine inositolphosphorylceramide transferase 1 from Arabidopsis thaliana (Mouse-ear cress).